A 460-amino-acid polypeptide reads, in one-letter code: tRNA-2-methylthio-N(6)-dimethylallyladenosine synthase (460 aa).

The region spanning 10–126 (GSYWITTFGC…LEVLLNRVDS (117 aa)) is the MTTase N-terminal domain. [4Fe-4S] cluster is bound by residues Cys19, Cys55, Cys89, Cys161, Cys165, and Cys168. The 238-residue stretch at 147-384 (RDSSICGWVN…NALVERCARE (238 aa)) folds into the Radical SAM core domain. In terms of domain architecture, TRAM spans 387–455 (ARYAGRTEEV…SFSLSGTPLP (69 aa)).

It belongs to the methylthiotransferase family. MiaB subfamily. In terms of assembly, monomer. [4Fe-4S] cluster is required as a cofactor.

It is found in the cytoplasm. The enzyme catalyses N(6)-dimethylallyladenosine(37) in tRNA + (sulfur carrier)-SH + AH2 + 2 S-adenosyl-L-methionine = 2-methylsulfanyl-N(6)-dimethylallyladenosine(37) in tRNA + (sulfur carrier)-H + 5'-deoxyadenosine + L-methionine + A + S-adenosyl-L-homocysteine + 2 H(+). Its function is as follows. Catalyzes the methylthiolation of N6-(dimethylallyl)adenosine (i(6)A), leading to the formation of 2-methylthio-N6-(dimethylallyl)adenosine (ms(2)i(6)A) at position 37 in tRNAs that read codons beginning with uridine. This is tRNA-2-methylthio-N(6)-dimethylallyladenosine synthase from Parasynechococcus marenigrum (strain WH8102).